The following is a 77-amino-acid chain: Acyl carrier protein (77 aa).

Residues 2–77 enclose the Carrier domain; that stretch reads AEVFDRVKEI…DAVDYINSKA (76 aa). Position 37 is an O-(pantetheine 4'-phosphoryl)serine (Ser37).

This sequence belongs to the acyl carrier protein (ACP) family. 4'-phosphopantetheine is transferred from CoA to a specific serine of apo-ACP by AcpS. This modification is essential for activity because fatty acids are bound in thioester linkage to the sulfhydryl of the prosthetic group.

It is found in the cytoplasm. It functions in the pathway lipid metabolism; fatty acid biosynthesis. Carrier of the growing fatty acid chain in fatty acid biosynthesis. This is Acyl carrier protein from Oceanobacillus iheyensis (strain DSM 14371 / CIP 107618 / JCM 11309 / KCTC 3954 / HTE831).